The chain runs to 329 residues: Tryptophan--tRNA ligase (329 aa).

ATP is bound by residues 9-11 and 17-18; these read QPS and GN. A 'HIGH' region motif is present at residues 10-18; sequence PSGIPTIGN. Position 133 (aspartate 133) interacts with L-tryptophan. ATP is bound by residues 145 to 147, valine 184, and 193 to 197; these read GDD and KMSKS. The 'KMSKS' region signature appears at 193–197; that stretch reads KMSKS.

Belongs to the class-I aminoacyl-tRNA synthetase family. Homodimer.

Its subcellular location is the cytoplasm. It catalyses the reaction tRNA(Trp) + L-tryptophan + ATP = L-tryptophyl-tRNA(Trp) + AMP + diphosphate + H(+). Functionally, catalyzes the attachment of tryptophan to tRNA(Trp). This is Tryptophan--tRNA ligase from Staphylococcus aureus (strain MSSA476).